The sequence spans 178 residues: ATP synthase subunit delta (178 aa).

This sequence belongs to the ATPase delta chain family. As to quaternary structure, F-type ATPases have 2 components, F(1) - the catalytic core - and F(0) - the membrane proton channel. F(1) has five subunits: alpha(3), beta(3), gamma(1), delta(1), epsilon(1). F(0) has three main subunits: a(1), b(2) and c(10-14). The alpha and beta chains form an alternating ring which encloses part of the gamma chain. F(1) is attached to F(0) by a central stalk formed by the gamma and epsilon chains, while a peripheral stalk is formed by the delta and b chains.

The protein resides in the cell membrane. Its function is as follows. F(1)F(0) ATP synthase produces ATP from ADP in the presence of a proton or sodium gradient. F-type ATPases consist of two structural domains, F(1) containing the extramembraneous catalytic core and F(0) containing the membrane proton channel, linked together by a central stalk and a peripheral stalk. During catalysis, ATP synthesis in the catalytic domain of F(1) is coupled via a rotary mechanism of the central stalk subunits to proton translocation. This protein is part of the stalk that links CF(0) to CF(1). It either transmits conformational changes from CF(0) to CF(1) or is implicated in proton conduction. The chain is ATP synthase subunit delta from Mycoplasma pneumoniae (strain ATCC 29342 / M129 / Subtype 1) (Mycoplasmoides pneumoniae).